Here is a 281-residue protein sequence, read N- to C-terminus: NAD kinase (281 aa).

Catalysis depends on aspartate 61, which acts as the Proton acceptor. NAD(+) contacts are provided by residues 61–62, 134–135, arginine 145, aspartate 164, 175–180, and glutamine 234; these read DG, ND, and TAYSLS.

It belongs to the NAD kinase family. It depends on a divalent metal cation as a cofactor.

It is found in the cytoplasm. The catalysed reaction is NAD(+) + ATP = ADP + NADP(+) + H(+). Functionally, involved in the regulation of the intracellular balance of NAD and NADP, and is a key enzyme in the biosynthesis of NADP. Catalyzes specifically the phosphorylation on 2'-hydroxyl of the adenosine moiety of NAD to yield NADP. This Clostridium botulinum (strain Kyoto / Type A2) protein is NAD kinase.